A 311-amino-acid chain; its full sequence is Cytosolic Fe-S cluster assembly factor Nubp1 homolog (311 aa).

[4Fe-4S] cluster contacts are provided by Cys-9, Cys-23, Cys-26, and Cys-32. 63 to 70 (GKGGVGKS) is an ATP binding site. [4Fe-4S] cluster-binding residues include Cys-240 and Cys-243.

It belongs to the Mrp/NBP35 ATP-binding proteins family. NUBP1/NBP35 subfamily. In terms of assembly, heterotetramer of 2 Nubp1 and 2 Nubp2 chains. The cofactor is [4Fe-4S] cluster.

The protein localises to the cytoplasm. Its function is as follows. Component of the cytosolic iron-sulfur (Fe/S) protein assembly (CIA) machinery. Required for maturation of extramitochondrial Fe-S proteins. The Nubp1-Nubp2 heterotetramer forms a Fe-S scaffold complex, mediating the de novo assembly of an Fe-S cluster and its transfer to target apoproteins. The chain is Cytosolic Fe-S cluster assembly factor Nubp1 homolog from Drosophila erecta (Fruit fly).